Consider the following 21-residue polypeptide: Kassinatuerin-1 (21 aa).

Ile21 bears the Isoleucine amide mark.

As to expression, expressed by the skin dorsal glands.

It localises to the secreted. Its function is as follows. Shows broad-spectrum antimicrobial activity against the Gram-negative bacterium E.coli (MIC=6.25 uM), K.pneumoniae (MIC=25 uM), E.cloacae (MIC=6.25 uM), P.aeruginosa (MIC=25 uM), the Gram-positive bacterium S.aureus (MIC=6.25 uM), S.epidermidis (MIC=6.25 uM), E.faecalis (MIC=12.5 uM), and the fungus C.albicans (MIC=100 uM). Has no antimicrobial effect against P.mirabilis (MIC&gt;100 uM). Has relatively high cytolytic and hemolytic activities. Its alpha-helix has considerable amphipathic character. The sequence is that of Kassinatuerin-1 from Kassina senegalensis (Senegal running frog).